A 268-amino-acid chain; its full sequence is Probable membrane transporter protein HI_0806 (268 aa).

Transmembrane regions (helical) follow at residues 6–26, 46–66, 79–99, 101–121, 147–167, 178–198, 212–232, and 248–268; these read IFILLICGICTNMVSAIFGIG, VISATSLTIVMCTALINLLFF, ILWSIAMVIGVQIGFELSFYF, TAIISLIFTVSLSALAIKTFL, GGGLIAGITGIGGGSILAPLV, IAVYTNYMMIIGGIGNLYGYL, LGLNFLVVGVVTLGSFEMSFF, and LLAIILFCIAAYMCILEFVFH.

This sequence belongs to the 4-toluene sulfonate uptake permease (TSUP) (TC 2.A.102) family.

The protein resides in the cell membrane. This Haemophilus influenzae (strain ATCC 51907 / DSM 11121 / KW20 / Rd) protein is Probable membrane transporter protein HI_0806.